The following is a 92-amino-acid chain: Small ribosomal subunit protein uS15c (92 aa).

This sequence belongs to the universal ribosomal protein uS15 family. Part of the 30S ribosomal subunit.

The protein localises to the plastid. It is found in the chloroplast. The sequence is that of Small ribosomal subunit protein uS15c (rps15-A) from Lemna minor (Common duckweed).